Reading from the N-terminus, the 742-residue chain is Kanadaptin (742 aa).

Residues 1–16 (MADILSQSETLASQDL) show a composition bias toward polar residues. The disordered stretch occupies residues 1–112 (MADILSQSET…PPWGGPATAP (112 aa)). A compositionally biased stretch (low complexity) spans 27-43 (VSPAARSKAPASSSSNP). Position 28 is a phosphoserine (S28). The segment covering 72-82 (GDFRSLQEEQS) has biased composition (basic and acidic residues). A Phosphoserine modification is found at S90. Pro residues predominate over residues 96-106 (RAPPYQEPPWG). The FHA domain maps to 135–195 (CLFGRLSGCD…HGTFLNKTRI (61 aa)). Residues 254 to 282 (LGEDSDEEEEMDTSERKINAGSQDDEMGC) are disordered. Residues 256–265 (EDSDEEEEMD) show a composition bias toward acidic residues. S258 and S412 each carry phosphoserine. A Glycyl lysine isopeptide (Lys-Gly) (interchain with G-Cter in SUMO2) cross-link involves residue K441. A coiled-coil region spans residues 443–476 (ETFESLVAKLNDAERELSEISERLKASSQVLSES). Residue S476 is modified to Phosphoserine. The interval 565–742 (LKTGTVGKLP…RTHLNDKYGY (178 aa)) is disordered. Residues 591 to 606 (PEVEEEEEEEEEEEKE) show a composition bias toward acidic residues. The span at 607-619 (KEEHEKKKLEDGS) shows a compositional bias: basic and acidic residues. A phosphoserine mark is found at S655 and S658. A compositionally biased stretch (low complexity) spans 699–708 (PGPGKLPPTL). Basic and acidic residues predominate over residues 732–742 (GRTHLNDKYGY).

In terms of tissue distribution, ubiquitously expressed.

The protein localises to the nucleus. The protein resides in the cytoplasm. The chain is Kanadaptin (SLC4A1AP) from Homo sapiens (Human).